The sequence spans 365 residues: Terpene cyclase 4 (365 aa).

The span at 1–11 (MVPSLITPPPS) shows a compositional bias: pro residues. Residues 1-20 (MVPSLITPPPSRSGEATPQK) are disordered. Residues D118, N260, and S264 each contribute to the Mg(2+) site. A D(D/E)XX(D/E) motif motif is present at residues 118–122 (DDPFD). Positions 260 to 268 (NDLCSYRKD) match the NSE motif motif. A WxxxxxRY motif motif is present at residues 341–348 (WSLYTFRY). Residues R347 and Y348 each coordinate (2E,6E)-farnesyl diphosphate.

The protein belongs to the terpene synthase family. As to quaternary structure, homodimer. Requires Mg(2+) as cofactor.

The catalysed reaction is (2E,6E)-farnesyl diphosphate + H2O = koraiol + diphosphate. Its pathway is sesquiterpene biosynthesis. In terms of biological role, terpene cyclase that catalyzes the cyclization of farnesyl diphosphate (FPP) to the sesquiterpene koraiol. This is Terpene cyclase 4 from Gibberella fujikuroi (strain CBS 195.34 / IMI 58289 / NRRL A-6831) (Bakanae and foot rot disease fungus).